The chain runs to 317 residues: Protoheme IX farnesyltransferase (317 aa).

The next 9 membrane-spanning stretches (helical) occupy residues 39-58, 62-84, 100-120, 123-143, 160-180, 184-204, 233-253, 256-276, and 293-313; these read VMSL…PGSL, LGAI…NMWY, IPAG…LAVG, LVMW…AIFF, IVIG…AVTG, LMPV…FWSL, IMAY…LGDT, VYGL…WRVL, and ARAA…ALAV.

This sequence belongs to the UbiA prenyltransferase family. Protoheme IX farnesyltransferase subfamily.

Its subcellular location is the cell inner membrane. The catalysed reaction is heme b + (2E,6E)-farnesyl diphosphate + H2O = Fe(II)-heme o + diphosphate. The protein operates within porphyrin-containing compound metabolism; heme O biosynthesis; heme O from protoheme: step 1/1. Functionally, converts heme B (protoheme IX) to heme O by substitution of the vinyl group on carbon 2 of heme B porphyrin ring with a hydroxyethyl farnesyl side group. The protein is Protoheme IX farnesyltransferase of Granulibacter bethesdensis (strain ATCC BAA-1260 / CGDNIH1).